Consider the following 94-residue polypeptide: Integration host factor subunit beta (94 aa).

The protein belongs to the bacterial histone-like protein family. As to quaternary structure, heterodimer of an alpha and a beta chain.

In terms of biological role, this protein is one of the two subunits of integration host factor, a specific DNA-binding protein that functions in genetic recombination as well as in transcriptional and translational control. This Yersinia pseudotuberculosis serotype O:1b (strain IP 31758) protein is Integration host factor subunit beta.